Reading from the N-terminus, the 1016-residue chain is Calmodulin-binding transcription activator 4 (1016 aa).

Positions 38–164 (ISTLYQEAHS…YRDVSEREEG (127 aa)) form a DNA-binding region, CG-1. Residues 324–343 (KNGSGPSGGTGGSGDQGSES) are disordered. A compositionally biased stretch (gly residues) spans 328-338 (GPSGGTGGSGD). 3 ANK repeats span residues 647-676 (QEQGIIHMVAGLGFEWAFYPILAHGVNVDF), 680-709 (KGWSALHWAAQFGSEKMVAALIASGASAGA), and 719-748 (NGKTAASIAASNGHKGLAGYLSEVALTNHL). Positions 753–786 (LEETENSKDTAQVQTEKTLNSISEQSPSGNEDQV) are disordered. Residues 761–785 (DTAQVQTEKTLNSISEQSPSGNEDQ) show a composition bias toward polar residues. 3 consecutive IQ domains span residues 798 to 827 (AAQAAARIQAAFRAHSFRKRKQREAALVAC), 855 to 884 (YNSAALSIQKNFRGYKDRKCFLELRQKVVK), and 878 to 907 (LRQKVVKIQAHVRGYQIRKNYKVICWAVRI). The calmodulin-binding stretch occupies residues 903-925 (WAVRILDKVVLRWRRKGVGLRGF). Phosphoserine is present on residues S935 and S962.

It belongs to the CAMTA family. In terms of tissue distribution, expressed in roots, stems, leaves, flowers and siliques.

The protein resides in the nucleus. Its function is as follows. Transcription activator that binds to the DNA consensus sequence 5'-[ACG]CGCG[GTC]-3'. Regulates transcriptional activity in response to calcium signals. Binds calmodulin in a calcium-dependent manner. Involved together with CAMTA2 and CAMTA3 in the positive regulation of a general stress response. In Arabidopsis thaliana (Mouse-ear cress), this protein is Calmodulin-binding transcription activator 4.